The sequence spans 424 residues: Probable methyltransferase EP424R (424 aa).

An Adrift-type SAM-dependent 2'-O-MTase domain is found at 103-315 (QIVTNAWLKM…TYIVGKNRLR (213 aa)). Residues Gly135 and Asp228 each contribute to the S-adenosyl-L-methionine site. Lys268 (proton acceptor) is an active-site residue.

The protein localises to the virion. This chain is Probable methyltransferase EP424R, found in Ornithodoros (relapsing fever ticks).